The chain runs to 796 residues: Cadherin-11 (796 aa).

Residues methionine 1–alanine 22 form the signal peptide. A propeptide spanning residues phenylalanine 23–arginine 53 is cleaved from the precursor. Cadherin domains lie at glycine 54–phenylalanine 159, leucine 160–phenylalanine 268, proline 269–phenylalanine 383, leucine 384–proline 486, and lysine 487–asparagine 612. Over glycine 54–threonine 617 the chain is Extracellular. Asparagine 455 and asparagine 540 each carry an N-linked (GlcNAc...) asparagine glycan. Residues glycine 618–leucine 640 form a helical membrane-spanning segment. Residues arginine 641–serine 796 are Cytoplasmic-facing. A Phosphoserine modification is found at serine 788. Threonine 791 carries the post-translational modification Phosphothreonine.

Interacts with PCDH8. Expressed mainly in brain but also found in other tissues. Expressed in neuroblasts. In the embryo from 67 to 72 days of gestation, detected at high levels in facial mesenchyme including the central palatal mesenchyme, dental mesenchyme, the eye and optic muscle, and the tongue (at protein level).

The protein resides in the cell membrane. In terms of biological role, cadherins are calcium-dependent cell adhesion proteins. They preferentially interact with themselves in a homophilic manner in connecting cells; cadherins may thus contribute to the sorting of heterogeneous cell types. Required for proper focal adhesion assembly. Involved in the regulation of cell migration. The polypeptide is Cadherin-11 (CDH11) (Homo sapiens (Human)).